The following is a 406-amino-acid chain: Exo-alpha-sialidase (406 aa).

The N-terminal stretch at 1–20 (MQSMRFMILALLVQFLPAWA) is a signal peptide. Residues Arg-59, Arg-78, Asp-84, and Gln-148 each coordinate substrate. Asn-235 is a glycosylation site (N-linked (GlcNAc...) asparagine). Substrate-binding positions include Arg-265, Arg-322, 322-323 (RR), 331-332 (YD), Lys-337, Tyr-358, Asp-376, and 376-378 (DFF). N-linked (GlcNAc...) asparagine glycosylation is present at Asn-396.

This sequence belongs to the glycosyl hydrolase 33 family.

It carries out the reaction Hydrolysis of alpha-(2-&gt;3)-, alpha-(2-&gt;6)-, alpha-(2-&gt;8)- glycosidic linkages of terminal sialic acid residues in oligosaccharides, glycoproteins, glycolipids, colominic acid and synthetic substrates.. Functionally, sialidase is able to release sialic acid from a wide variety of natural substrates including bovine salivary mucin, colominic acid, bovine fetuin, a serum glycoprotein containing both alpha-2-6 and alpha-2-3-linkages in a ratio of about 3:2, and glycoproteins and glycolipids from thermally denatured human lung epithelial cells. Does not show any trans-sialidase activity since it is able to remove terminal sialic acid residues but is unable to catalyze their transfer to the acceptor substrate. 2-keto-3-deoxynononic acid (KDN) is the preferred substrate and A.fumigatus can utilize KDN as a sole carbon source. In Aspergillus fumigatus (strain ATCC MYA-4609 / CBS 101355 / FGSC A1100 / Af293) (Neosartorya fumigata), this protein is Exo-alpha-sialidase.